The following is a 353-amino-acid chain: Quinolinate synthase (353 aa).

Iminosuccinate is bound by residues H47 and S68. C113 contributes to the [4Fe-4S] cluster binding site. Iminosuccinate-binding positions include 139–141 and S156; that span reads YAN. C200 is a [4Fe-4S] cluster binding site. Iminosuccinate-binding positions include 226 to 228 and T243; that span reads HPE. C297 serves as a coordination point for [4Fe-4S] cluster.

This sequence belongs to the quinolinate synthase family. Type 1 subfamily. Requires [4Fe-4S] cluster as cofactor.

The protein resides in the cytoplasm. The catalysed reaction is iminosuccinate + dihydroxyacetone phosphate = quinolinate + phosphate + 2 H2O + H(+). The protein operates within cofactor biosynthesis; NAD(+) biosynthesis; quinolinate from iminoaspartate: step 1/1. In terms of biological role, catalyzes the condensation of iminoaspartate with dihydroxyacetone phosphate to form quinolinate. The protein is Quinolinate synthase of Yersinia pestis bv. Antiqua (strain Nepal516).